A 161-amino-acid chain; its full sequence is UPF0178 protein BOV_1904 (161 aa).

It belongs to the UPF0178 family.

The sequence is that of UPF0178 protein BOV_1904 from Brucella ovis (strain ATCC 25840 / 63/290 / NCTC 10512).